Here is a 187-residue protein sequence, read N- to C-terminus: Elongation factor P (187 aa).

Belongs to the elongation factor P family.

Its subcellular location is the cytoplasm. It participates in protein biosynthesis; polypeptide chain elongation. Involved in peptide bond synthesis. Stimulates efficient translation and peptide-bond synthesis on native or reconstituted 70S ribosomes in vitro. Probably functions indirectly by altering the affinity of the ribosome for aminoacyl-tRNA, thus increasing their reactivity as acceptors for peptidyl transferase. This is Elongation factor P from Desulfotalea psychrophila (strain LSv54 / DSM 12343).